Reading from the N-terminus, the 89-residue chain is Elongation factor 1-beta (89 aa).

The protein belongs to the EF-1-beta/EF-1-delta family.

In terms of biological role, promotes the exchange of GDP for GTP in EF-1-alpha/GDP, thus allowing the regeneration of EF-1-alpha/GTP that could then be used to form the ternary complex EF-1-alpha/GTP/AAtRNA. This chain is Elongation factor 1-beta, found in Methanococcus maripaludis (strain C5 / ATCC BAA-1333).